We begin with the raw amino-acid sequence, 194 residues long: Putative adenylate kinase (194 aa).

5 residues coordinate ATP: Gly16, Gly18, Lys19, Thr20, and Thr21. Positions 36–59 are NMP; sequence SVGELLAGTPYVTYIPELDTYEIV. Residues 108–118 form an LID region; the sequence is RRGWPLKKILD. Arg109 contributes to the ATP binding site.

This sequence belongs to the adenylate kinase family. AK6 subfamily. In terms of assembly, interacts with uS11. Not a structural component of 40S pre-ribosomes, but transiently interacts with them by binding to uS11.

The catalysed reaction is AMP + ATP = 2 ADP. The enzyme catalyses ATP + H2O = ADP + phosphate + H(+). Broad-specificity nucleoside monophosphate (NMP) kinase that catalyzes the reversible transfer of the terminal phosphate group between nucleoside triphosphates and monophosphates. Also has ATPase activity. Involved in the late maturation steps of the 30S ribosomal particles, specifically 16S rRNA maturation. While NMP activity is not required for ribosome maturation, ATPase activity is. Associates transiently with small ribosomal subunit protein uS11. ATP hydrolysis breaks the interaction with uS11. May temporarily remove uS11 from the ribosome to enable a conformational change of the ribosomal RNA that is needed for the final maturation step of the small ribosomal subunit. The chain is Putative adenylate kinase from Pyrobaculum aerophilum (strain ATCC 51768 / DSM 7523 / JCM 9630 / CIP 104966 / NBRC 100827 / IM2).